We begin with the raw amino-acid sequence, 517 residues long: MDIVGGQNLRQMWDDLAGVYGDKTALIFESCEGIVRQFSYASLNEEINRTANLFYSLGIRKGDRVALHLDNCPEFIFCWFGLAKIGAIMVPINARLLGEESAWILQNSQVSLLVTSVQFYPMYREIRQDNSTPLNHICLIGEQLPADDGVSHFSQLQARQSATLCYTPALSTDDTAEILFTSGTTSRPKGVVITHYNLRFAGYYSAWQIALRDDDVYMTVMPAFHIDCQCTAAMPAFSAGSTFVLLEKYSARAFWDQVRKYQATVTECIPMMIRTLMVQPAAPTDRQHHLREVMFYLNLSEQEKDDFTERFGVRLLTSYGMTETIVGIIGDRPGDKRRWPSIGRVGFSYEAEIRDDQNRPLPAGEIGEICIKGIPGKTIFKEYYMQPEATARALEPEGWLHTGDSGYQDEDGYFYFVDRRCNMIKRGGENVSCVELENIISAHPKIQDIVVVGIKDAIRDEAIKAFIVLNEGETLSEAEFFSFCENNMAKFKVPSFMEIRTDLPRNCSGKIIKKNLK.

It belongs to the ATP-dependent AMP-binding enzyme family.

The catalysed reaction is 4-(trimethylamino)butanoate + ATP + CoA = 4-(trimethylamino)butanoyl-CoA + AMP + diphosphate. It carries out the reaction crotonobetaine + ATP + CoA = crotonobetainyl-CoA + AMP + diphosphate. The enzyme catalyses (R)-carnitine + ATP + CoA = (R)-carnitinyl-CoA + AMP + diphosphate. It participates in amine and polyamine metabolism; carnitine metabolism. Its function is as follows. Catalyzes the transfer of CoA to carnitine, generating the initial carnitinyl-CoA needed for the CaiB reaction cycle. Also has activity toward crotonobetaine and gamma-butyrobetaine. This is Crotonobetaine/carnitine--CoA ligase from Salmonella enteritidis PT4 (strain P125109).